The primary structure comprises 530 residues: AarF domain-containing protein kinase 1 (530 aa).

In terms of domain architecture, Protein kinase spans 155 to 467 (SFDDTPLGTA…ASSFLNMSRC (313 aa)). Residues 161-169 (LGTASLAQV) and Lys183 contribute to the ATP site. Asp315 serves as the catalytic Proton acceptor.

The protein belongs to the protein kinase superfamily. ADCK protein kinase family.

It localises to the mitochondrion. Functionally, appears to be essential for maintaining mitochondrial cristae formation and mitochondrial function by acting via YME1L1 in a kinase-independent manner to regulate essential mitochondrial structural proteins OPA1 and IMMT. The action of this enzyme is not yet clear. It is not known if it has protein kinase activity and what type of substrate it would phosphorylate (Ser, Thr or Tyr). The polypeptide is AarF domain-containing protein kinase 1 (Homo sapiens (Human)).